A 662-amino-acid polypeptide reads, in one-letter code: DNA ligase (662 aa).

NAD(+) contacts are provided by residues 34-38 (DYDYD), 83-84 (SI), and glutamate 113. Lysine 115 acts as the N6-AMP-lysine intermediate in catalysis. Residues arginine 136, glutamate 172, lysine 286, and lysine 310 each contribute to the NAD(+) site. Residues cysteine 404, cysteine 407, cysteine 422, and cysteine 427 each coordinate Zn(2+). In terms of domain architecture, BRCT spans 583 to 662 (RESSSCLGKT…NDLLKILYPN (80 aa)).

The protein belongs to the NAD-dependent DNA ligase family. LigA subfamily. Requires Mg(2+) as cofactor. Mn(2+) serves as cofactor.

It carries out the reaction NAD(+) + (deoxyribonucleotide)n-3'-hydroxyl + 5'-phospho-(deoxyribonucleotide)m = (deoxyribonucleotide)n+m + AMP + beta-nicotinamide D-nucleotide.. DNA ligase that catalyzes the formation of phosphodiester linkages between 5'-phosphoryl and 3'-hydroxyl groups in double-stranded DNA using NAD as a coenzyme and as the energy source for the reaction. It is essential for DNA replication and repair of damaged DNA. This Chlamydia caviae (strain ATCC VR-813 / DSM 19441 / 03DC25 / GPIC) (Chlamydophila caviae) protein is DNA ligase.